Consider the following 251-residue polypeptide: Triosephosphate isomerase (251 aa).

9–11 (NWK) provides a ligand contact to substrate. The Electrophile role is filled by H96. E168 serves as the catalytic Proton acceptor. Substrate is bound by residues G174, S214, and 235-236 (GG).

This sequence belongs to the triosephosphate isomerase family. Homodimer.

Its subcellular location is the cytoplasm. It carries out the reaction D-glyceraldehyde 3-phosphate = dihydroxyacetone phosphate. It participates in carbohydrate biosynthesis; gluconeogenesis. Its pathway is carbohydrate degradation; glycolysis; D-glyceraldehyde 3-phosphate from glycerone phosphate: step 1/1. In terms of biological role, involved in the gluconeogenesis. Catalyzes stereospecifically the conversion of dihydroxyacetone phosphate (DHAP) to D-glyceraldehyde-3-phosphate (G3P). This is Triosephosphate isomerase from Cytophaga hutchinsonii (strain ATCC 33406 / DSM 1761 / CIP 103989 / NBRC 15051 / NCIMB 9469 / D465).